A 215-amino-acid chain; its full sequence is Cytochrome b6 (215 aa).

The chain crosses the membrane as a helical span at residues Ile-32–Phe-52. Cys-35 is a binding site for heme c. The heme b site is built by His-86 and His-100. The next 3 helical transmembrane spans lie at Ala-90–Phe-110, Leu-116–Tyr-136, and Leu-186–Ile-206. 2 residues coordinate heme b: His-187 and His-202.

This sequence belongs to the cytochrome b family. PetB subfamily. In terms of assembly, the 4 large subunits of the cytochrome b6-f complex are cytochrome b6, subunit IV (17 kDa polypeptide, PetD), cytochrome f and the Rieske protein, while the 4 small subunits are PetG, PetL, PetM and PetN. The complex functions as a dimer. Requires heme b as cofactor. It depends on heme c as a cofactor.

It is found in the plastid. The protein localises to the chloroplast thylakoid membrane. Its function is as follows. Component of the cytochrome b6-f complex, which mediates electron transfer between photosystem II (PSII) and photosystem I (PSI), cyclic electron flow around PSI, and state transitions. The chain is Cytochrome b6 from Daucus carota (Wild carrot).